The sequence spans 404 residues: Metacaspase-1 (404 aa).

Positions 1 to 97 (MHHHHQQPSY…NPQAFGHGAP (97 aa)) are disordered. Residues His195 and Cys251 contribute to the active site.

Belongs to the peptidase C14B family.

Involved in cell death (apoptosis). In Emericella nidulans (strain FGSC A4 / ATCC 38163 / CBS 112.46 / NRRL 194 / M139) (Aspergillus nidulans), this protein is Metacaspase-1 (casA).